Here is a 284-residue protein sequence, read N- to C-terminus: Adenylate kinase 1, chloroplastic (284 aa).

Residues 1-36 constitute a chloroplast transit peptide; sequence MARLVRVARSSSLFGFGNRFYSTSAEASHASSPSPF. 61–66 contacts ATP; that stretch reads GVGKGT. Residues 81 to 110 form an NMP region; that stretch reads ATGDLVREELASSGPLSQKLSEIVNQGKLV. Residues Thr82, Arg87, 108 to 110, 138 to 141, and Gln145 each bind AMP; these read KLV and GFPR. Residues 174 to 222 form an LID region; sequence GRRTCSQCGKGFNVAHINLKGENGRPGISMDPLLPPHQCMSKLVTRADD. Arg175 is an ATP binding site. Residues Arg219 and Arg230 each contribute to the AMP site. Gly258 serves as a coordination point for ATP.

The protein belongs to the adenylate kinase family. In terms of assembly, monomer. As to expression, highly expressed in flowers and at lower levels in roots, leaves and stems.

The protein localises to the plastid. The protein resides in the chloroplast stroma. The enzyme catalyses AMP + ATP = 2 ADP. Functionally, catalyzes the reversible transfer of the terminal phosphate group between ATP and AMP. Plays an important role in cellular energy homeostasis, adenine nucleotide metabolism and plant growth. The chain is Adenylate kinase 1, chloroplastic (ADK) from Arabidopsis thaliana (Mouse-ear cress).